The sequence spans 263 residues: Hemophilin (263 aa).

Positions 1–20 (MKISQLFLGLVACSTAFAYA) are cleaved as a signal peptide. Heme b is bound by residues H42, Y58, S104, and H105.

In terms of assembly, monomer in solution. Interacts with host hemoglobin.

It is found in the secreted. In terms of biological role, part of a high affinity heme acquisition system. Functions as a hemophore that acquires heme from human hemoglobin and delivers the heme to its cognate receptor, HphR, facilitating transport of heme across the bacterial outer membrane. Apo HphA interacts specifically with human hemoglobin and steals heme through a passive process probably due to its high affinity for heme. It can also acquire heme complexed to human serum albumin. Plays a supporting role for full virulence, acting as an accessory factor that enhances the process of heme uptake. The chain is Hemophilin from Acinetobacter baumannii.